A 123-amino-acid polypeptide reads, in one-letter code: UPF0102 protein APJL_1381 (123 aa).

The protein belongs to the UPF0102 family.

The chain is UPF0102 protein APJL_1381 from Actinobacillus pleuropneumoniae serotype 3 (strain JL03).